The primary structure comprises 559 residues: Glutamine--tRNA ligase (559 aa).

The 'HIGH' region signature appears at 44–54 (PEPNGYLHIGH). ATP is bound by residues 45–47 (EPN) and 51–57 (HIGHAKS). Residues D77 and Y222 each contribute to the L-glutamine site. ATP-binding positions include T241 and 272-273 (RL). The short motif at 279-283 (LTSKR) is the 'KMSKS' region element.

This sequence belongs to the class-I aminoacyl-tRNA synthetase family. As to quaternary structure, monomer.

The protein resides in the cytoplasm. The enzyme catalyses tRNA(Gln) + L-glutamine + ATP = L-glutaminyl-tRNA(Gln) + AMP + diphosphate. The sequence is that of Glutamine--tRNA ligase from Actinobacillus succinogenes (strain ATCC 55618 / DSM 22257 / CCUG 43843 / 130Z).